Consider the following 304-residue polypeptide: Transcription factor BEE 2 (304 aa).

A disordered region spans residues 74–132 (FHMEPVKNNGHSRAITLQNKRKPEGKTEKREKKKIKAEDETEPSMKGKSNMSNTETSSE). Residues 82-91 (NGHSRAITLQ) show a composition bias toward polar residues. A compositionally biased stretch (basic and acidic residues) spans 94–103 (RKPEGKTEKR). Over residues 120-132 (GKSNMSNTETSSE) the composition is skewed to polar residues. The bHLH domain maps to 147-197 (EATDRHSLAERARREKISKKMKCLQDIVPGCNKVTGKAGMLDEIINYVQSL).

As to quaternary structure, homodimer. In terms of tissue distribution, expressed in stems and flowers.

The protein resides in the nucleus. In terms of biological role, positive regulator of brassinosteroid signaling. This Arabidopsis thaliana (Mouse-ear cress) protein is Transcription factor BEE 2 (BEE2).